A 154-amino-acid chain; its full sequence is UPF0756 membrane protein EAT1b_0668 (154 aa).

5 consecutive transmembrane segments (helical) span residues 5-25 (LFLL…VIIA), 52-72 (WGVT…DIGF), 82-102 (PVGI…GQGV), 107-127 (VDPV…GFMK), and 129-149 (IPVG…GYQV).

Belongs to the UPF0756 family.

Its subcellular location is the cell membrane. The polypeptide is UPF0756 membrane protein EAT1b_0668 (Exiguobacterium sp. (strain ATCC BAA-1283 / AT1b)).